The chain runs to 500 residues: NAD(P)H-quinone oxidoreductase chain 4, chloroplastic (500 aa).

15 helical membrane-spanning segments follow: residues phenylalanine 4–phenylalanine 24, isoleucine 37–leucine 57, isoleucine 87–valine 107, leucine 113–serine 130, leucine 134–methionine 154, phenylalanine 167–leucine 187, isoleucine 207–isoleucine 227, histidine 242–valine 262, alanine 272–alanine 292, isoleucine 305–aspartate 325, glycine 330–glycine 350, methionine 364–alanine 384, leucine 386–threonine 406, valine 417–leucine 437, and phenylalanine 463–phenylalanine 483.

This sequence belongs to the complex I subunit 4 family.

The protein resides in the plastid. Its subcellular location is the chloroplast thylakoid membrane. The enzyme catalyses a plastoquinone + NADH + (n+1) H(+)(in) = a plastoquinol + NAD(+) + n H(+)(out). It catalyses the reaction a plastoquinone + NADPH + (n+1) H(+)(in) = a plastoquinol + NADP(+) + n H(+)(out). This chain is NAD(P)H-quinone oxidoreductase chain 4, chloroplastic, found in Cucumis sativus (Cucumber).